Consider the following 490-residue polypeptide: DNA-binding protein D-ETS-3 (490 aa).

Disordered stretches follow at residues 190-255 (TASS…SGGG) and 271-294 (SSTQ…SQLR). Positions 196 to 207 (HVEHKVRADKST) are enriched in basic and acidic residues. The span at 211 to 227 (ATTSSHAAAPSSSSSAS) shows a compositional bias: low complexity. Residues 244–255 (GTGGGASASGGG) show a composition bias toward gly residues. Over residues 271–280 (SSTQSQGYSS) the composition is skewed to low complexity. A DNA-binding region (ETS) is located at residues 317–397 (IQLWQFLLEL…HGKRYAYKFD (81 aa)).

The protein belongs to the ETS family. As to expression, embryonic ventral nervous system, higher in the thoracic than abdominal segments.

It is found in the nucleus. The protein is DNA-binding protein D-ETS-3 (Ets65A) of Drosophila melanogaster (Fruit fly).